We begin with the raw amino-acid sequence, 112 residues long: uncharacterized protein (112 aa).

A helical membrane pass occupies residues 85-105 (IVQLIILFAIIITNPNAIELI).

Belongs to the M.jannaschii MJ0023/MJ0349/MJ1072/MJ1074/MJ1107/MJECL16 family.

The protein localises to the membrane. This is an uncharacterized protein from Methanocaldococcus jannaschii (strain ATCC 43067 / DSM 2661 / JAL-1 / JCM 10045 / NBRC 100440) (Methanococcus jannaschii).